The chain runs to 142 residues: Membrane protein YneK (142 aa).

The chain crosses the membrane as a helical span at residues 6 to 26; that stretch reads FLWFILFWVIMMVVLLSIGGF.

In terms of assembly, interacts with the N-terminal D1 domain of dynamin-like protein DynA.

It localises to the cell membrane. The sequence is that of Membrane protein YneK (yneK) from Bacillus subtilis (strain 168).